A 450-amino-acid chain; its full sequence is Phospho-2-dehydro-3-deoxyheptonate aldolase (450 aa).

Positions 1-13 (MTVNAKTSPSAGN) are enriched in polar residues. Residues 1–20 (MTVNAKTSPSAGNTWRDLPA) form a disordered region.

Belongs to the class-II DAHP synthase family. As to quaternary structure, homodimer.

It carries out the reaction D-erythrose 4-phosphate + phosphoenolpyruvate + H2O = 7-phospho-2-dehydro-3-deoxy-D-arabino-heptonate + phosphate. Its pathway is metabolic intermediate biosynthesis; chorismate biosynthesis; chorismate from D-erythrose 4-phosphate and phosphoenolpyruvate: step 1/7. This chain is Phospho-2-dehydro-3-deoxyheptonate aldolase (aroH), found in Streptomyces coelicolor (strain ATCC BAA-471 / A3(2) / M145).